Consider the following 551-residue polypeptide: uncharacterized protein (551 aa).

Topologically, residues 1–7 (MKKNSSV) are cytoplasmic. A helical transmembrane segment spans residues 8 to 28 (VFFLVGLSQFVTMAFLIIGSI). The Vacuolar segment spans residues 29-88 (TAPIFKQIGYSKYDEITYGTFGYCKEGSCSKASYNYHPDELSDSDSNWKLNSNARSILGK). Residues 89 to 109 (IIFITPIAAGLNFLGFLCTIM) traverse the membrane as a helical segment. Residues 110 to 135 (SVLLINVLSSDRVGSASAIMFFVNLT) are Cytoplasmic-facing. A helical membrane pass occupies residues 136 to 156 (FSTLGFLSASLICIVVFLLFY). Residues 157–160 (PHVT) lie on the Vacuolar side of the membrane. Residues 161–181 (WCSWVLIPGAALSLLVIPLIF) form a helical membrane-spanning segment. Over 182–551 (SAYSRSSGSR…TSLNNPYGFR (370 aa)) the chain is Cytoplasmic. A phosphoserine mark is found at Ser224 and Ser232. The tract at residues 280 to 341 (AKDMENSNGS…NGSNTSNNIN (62 aa)) is disordered. The span at 307 to 320 (TSTYSVIESESGLK) shows a compositional bias: polar residues. Residues 321-341 (NGSVSNNYVRNNGSNTSNNIN) show a composition bias toward low complexity. At Ser363 the chain carries Phosphoserine.

As to quaternary structure, forms homo dimers or homooligomers in MCC microdomains. Interacts with BOI2 and RHO3, two key regulators of secretion.

Its subcellular location is the vacuole membrane. It is found in the cell membrane. In terms of biological role, protein involved in secretion and cell wall organization. Contributes to cell surface-related functions as a auxiliary component of MCC/eisosome that specifically interacts with the secretory pathway. This is an uncharacterized protein from Saccharomyces cerevisiae (strain ATCC 204508 / S288c) (Baker's yeast).